The chain runs to 356 residues: Galectin-9C (356 aa).

The Galectin 1 domain maps to 17–148; the sequence is FSGTIQGGLQ…SVQLSYISFQ (132 aa). 82–88 provides a ligand contact to a beta-D-galactoside; that stretch reads WGPEERK. The segment at 170-190 is disordered; that stretch reads FPPRPRGRRQKPPSVRPANPA. The region spanning 228-356 is the Galectin 2 domain; the sequence is FITTIPGGLY…GDIQLTHVQT (129 aa). A beta-D-galactoside is bound at residue 288 to 294; that stretch reads WGSEERS.

Its function is as follows. Binds galactosides. This chain is Galectin-9C (LGALS9C), found in Homo sapiens (Human).